The primary structure comprises 146 residues: uncharacterized protein (146 aa).

The helical transmembrane segment at 7–27 (FVLSITIVLVILIIIAYIWYN) threads the bilayer.

The protein belongs to the asfivirus E146L family.

Its subcellular location is the host membrane. It localises to the virion. This is an uncharacterized protein from Ornithodoros (relapsing fever ticks).